The sequence spans 410 residues: Cysteine desulfurase IscS (410 aa).

Residues 79–80 (AT), asparagine 159, glutamine 187, and 207–209 (SGH) contribute to the pyridoxal 5'-phosphate site. Lysine 210 carries the N6-(pyridoxal phosphate)lysine modification. Threonine 248 is a binding site for pyridoxal 5'-phosphate. The active-site Cysteine persulfide intermediate is cysteine 334. Position 334 (cysteine 334) interacts with [2Fe-2S] cluster.

The protein belongs to the class-V pyridoxal-phosphate-dependent aminotransferase family. NifS/IscS subfamily. As to quaternary structure, homodimer. Forms a heterotetramer with IscU, interacts with other sulfur acceptors. Requires pyridoxal 5'-phosphate as cofactor.

Its subcellular location is the cytoplasm. The enzyme catalyses (sulfur carrier)-H + L-cysteine = (sulfur carrier)-SH + L-alanine. The protein operates within cofactor biosynthesis; iron-sulfur cluster biosynthesis. In terms of biological role, master enzyme that delivers sulfur to a number of partners involved in Fe-S cluster assembly, tRNA modification or cofactor biosynthesis. Catalyzes the removal of elemental sulfur atoms from cysteine to produce alanine. Functions as a sulfur delivery protein for Fe-S cluster synthesis onto IscU, an Fe-S scaffold assembly protein, as well as other S acceptor proteins. This is Cysteine desulfurase IscS from Ehrlichia chaffeensis (strain ATCC CRL-10679 / Arkansas).